Here is a 220-residue protein sequence, read N- to C-terminus: Peptidoglycan hydrolase gp5 (220 aa).

Belongs to the peptidase U40 family. As to quaternary structure, monomer.

It localises to the virion. Functionally, muralytic enzyme exposed to host peptidoglycan layer after membrane fusion during viral entry. Functions as an exolysin that cleaves the peptide bridge formed by meso-diaminopimelic acid and D-alanine. Also lyses the host cell late in infection to release the virions. The chain is Peptidoglycan hydrolase gp5 (P5) from Pseudomonas savastanoi pv. phaseolicola (Pseudomonas syringae pv. phaseolicola).